The following is a 440-amino-acid chain: 6-phospho-alpha-glucosidase (440 aa).

4-70 (FSIVVAGGGS…PDINFVYTTD (67 aa)) contributes to the NAD(+) binding site. Substrate is bound by residues arginine 93 and asparagine 147. Mn(2+) is bound at residue cysteine 169. The active-site Proton donor is the aspartate 170. Histidine 200 contacts Mn(2+). The active-site Proton acceptor is tyrosine 263. Arginine 283 is a binding site for substrate.

It belongs to the glycosyl hydrolase 4 family. As to quaternary structure, homodimer. The cofactor is NAD(+). Requires Mn(2+) as cofactor.

Its pathway is glycan degradation; palatinose degradation. Its function is as follows. In vitro, readily hydrolyzes p-nitrophenyl-alpha-D-glucopyranoside 6-phosphate (pNPalphaG6P), a chromogenic analog of the phosphorylated isomers of sucrose. In vivo, is probably involved in the degradation of the 6-phosphate derivatives of the sucrose isomers trehalulose, turanose, maltulose and palatinose, catalyzing their hydrolysis into glucose 6-phosphate (G6P) and fructose, which allows the bacterium to use these sugars as energy sources for growth. Is not able to hydrolyze the C2 or C4 chromogenic stereomers (i.e. pNPalpha-mannopyranoside-6P and pNPalpha-galactopyranoside-6P, respectively). The chain is 6-phospho-alpha-glucosidase (pagL) from Leptotrichia buccalis (strain ATCC 14201 / DSM 1135 / JCM 12969 / NCTC 10249 / C-1013-b).